Here is a 1045-residue protein sequence, read N- to C-terminus: Fibrosin-1-like protein (1045 aa).

Residues 1–12 show a composition bias toward basic residues; it reads MEAKVRPSRRSR. Disordered regions lie at residues 1–86 and 99–315; these read MEAK…DGFA and DMAL…THVP. The span at 13–28 shows a compositional bias: basic and acidic residues; the sequence is AQRDRGRRREAARDAR. Over residues 48 to 63 the composition is skewed to low complexity; that stretch reads GLRGAPPRGAAPAPRT. The segment covering 99-123 has biased composition (basic and acidic residues); the sequence is DMALKPHERKEKWERRLIKKPRESE. Over residues 183–197 the composition is skewed to polar residues; sequence EATSSRDPLSDSSAH. Residues 270–280 are compositionally biased toward pro residues; it reads HAAPCPGPPPG. At serine 340 the chain carries Phosphoserine. The span at 443 to 457 shows a compositional bias: basic residues; it reads QHTHQHTHQHTHQHQ. Disordered regions lie at residues 443–462 and 719–753; these read QHTH…TFAP and EGSS…PKSV. Residues 741-750 show a composition bias toward pro residues; that stretch reads PSFPAPPPWP. Serine 790 carries the phosphoserine modification. 2 disordered regions span residues 809-880 and 910-961; these read ELGR…APLQ and AAAP…PALD. Basic and acidic residues predominate over residues 817-837; the sequence is AEREAEPRVKESRSPAKEEAA. Lysine 858 participates in a covalent cross-link: Glycyl lysine isopeptide (Lys-Gly) (interchain with G-Cter in SUMO2). Residues 910–922 show a composition bias toward low complexity; that stretch reads AAAPAPGSAALLE. A compositionally biased stretch (basic and acidic residues) spans 923–949; it reads PPERPYRDREPHGYSPERLRGELERAR. Phosphoserine occurs at positions 937 and 977. Phosphothreonine occurs at positions 989 and 1010. Residues 991–1045 form a disordered region; sequence PAAAALGAPPPLVTAAGPPTPPGPPRSRTTPLGGLGPGEARDYSPSRNPPEVEAR. A compositionally biased stretch (pro residues) spans 998–1015; the sequence is APPPLVTAAGPPTPPGPP. The segment covering 1029 to 1045 has biased composition (basic and acidic residues); the sequence is EARDYSPSRNPPEVEAR.

Belongs to the AUTS2 family.

The sequence is that of Fibrosin-1-like protein (FBRSL1) from Homo sapiens (Human).